The primary structure comprises 145 residues: Putative sterol 14-demethylase-like protein (145 aa).

The helical transmembrane segment at 5–25 (YYTLLKTSVAIIIVFVVAKLI) threads the bilayer.

It belongs to the cytochrome P450 family. In terms of tissue distribution, expressed specifically in roots.

It localises to the membrane. This is Putative sterol 14-demethylase-like protein (CYP51G2) from Arabidopsis thaliana (Mouse-ear cress).